A 187-amino-acid polypeptide reads, in one-letter code: UPF0340 protein SPD_0576 (187 aa).

The protein belongs to the UPF0340 family.

In Streptococcus pneumoniae serotype 2 (strain D39 / NCTC 7466), this protein is UPF0340 protein SPD_0576.